The following is a 391-amino-acid chain: Phosphoglycerate kinase (391 aa).

Substrate is bound by residues aspartate 21 to asparagine 23, arginine 36, histidine 59 to arginine 62, arginine 113, and arginine 146. ATP-binding positions include lysine 197, glutamate 319, and glycine 345–threonine 348.

It belongs to the phosphoglycerate kinase family. Monomer.

It is found in the cytoplasm. It carries out the reaction (2R)-3-phosphoglycerate + ATP = (2R)-3-phospho-glyceroyl phosphate + ADP. It participates in carbohydrate degradation; glycolysis; pyruvate from D-glyceraldehyde 3-phosphate: step 2/5. This is Phosphoglycerate kinase from Shewanella woodyi (strain ATCC 51908 / MS32).